Here is a 65-residue protein sequence, read N- to C-terminus: Large ribosomal subunit protein bL35 (65 aa).

A disordered region spans residues 1 to 47; that stretch reads MPKIKTNRGAAKRFRKTASGKIKRNSAFTSHILTSKTRKRKRQLRSS. Residues 10-24 are compositionally biased toward basic residues; it reads AAKRFRKTASGKIKR. Residues 26–35 are compositionally biased toward polar residues; the sequence is SAFTSHILTS.

The protein belongs to the bacterial ribosomal protein bL35 family.

The chain is Large ribosomal subunit protein bL35 from Geobacter metallireducens (strain ATCC 53774 / DSM 7210 / GS-15).